A 270-amino-acid chain; its full sequence is Diaminopimelate epimerase (270 aa).

Residues asparagine 15, glutamine 49, and asparagine 66 each contribute to the substrate site. The active-site Proton donor is the cysteine 75. Substrate-binding positions include 76–77 (GN), asparagine 155, asparagine 187, and 204–205 (ER). Residue cysteine 213 is the Proton acceptor of the active site. 214 to 215 (GS) is a binding site for substrate.

This sequence belongs to the diaminopimelate epimerase family. In terms of assembly, homodimer.

Its subcellular location is the cytoplasm. It carries out the reaction (2S,6S)-2,6-diaminopimelate = meso-2,6-diaminopimelate. The protein operates within amino-acid biosynthesis; L-lysine biosynthesis via DAP pathway; DL-2,6-diaminopimelate from LL-2,6-diaminopimelate: step 1/1. Its function is as follows. Catalyzes the stereoinversion of LL-2,6-diaminopimelate (L,L-DAP) to meso-diaminopimelate (meso-DAP), a precursor of L-lysine and an essential component of the bacterial peptidoglycan. The protein is Diaminopimelate epimerase of Rickettsia rickettsii (strain Iowa).